The sequence spans 112 residues: Nitrogen regulatory protein P-II (112 aa).

At Y51 the chain carries O-UMP-tyrosine.

The protein belongs to the P(II) protein family. In terms of assembly, homotrimer. Post-translationally, uridylylated/deuridylylated by GlnD.

Its function is as follows. P-II indirectly controls the transcription of the glutamine synthetase gene (GlnA). P-II prevents NR-II-catalyzed conversion of NR-I to NR-I-phosphate, the transcriptional activator of GlnA. When P-II is uridylylated to P-II-UMP, these events are reversed. When the ratio of Gln to 2-ketoglutarate decreases, P-II is uridylylated to P-II-UMP, which causes the deadenylation of glutamine synthetase by GlnE, so activating the enzyme. This is Nitrogen regulatory protein P-II (glnB) from Haemophilus influenzae (strain ATCC 51907 / DSM 11121 / KW20 / Rd).